A 428-amino-acid chain; its full sequence is Enolase (428 aa).

A (2R)-2-phosphoglycerate-binding site is contributed by Q164. The active-site Proton donor is the E208. The Mg(2+) site is built by D245, E286, and D313. Residues K338, R367, S368, and K389 each contribute to the (2R)-2-phosphoglycerate site. K338 serves as the catalytic Proton acceptor.

It belongs to the enolase family. Mg(2+) serves as cofactor.

The protein resides in the cytoplasm. The protein localises to the secreted. It is found in the cell surface. It carries out the reaction (2R)-2-phosphoglycerate = phosphoenolpyruvate + H2O. Its pathway is carbohydrate degradation; glycolysis; pyruvate from D-glyceraldehyde 3-phosphate: step 4/5. Functionally, catalyzes the reversible conversion of 2-phosphoglycerate (2-PG) into phosphoenolpyruvate (PEP). It is essential for the degradation of carbohydrates via glycolysis. This is Enolase from Pyrococcus horikoshii (strain ATCC 700860 / DSM 12428 / JCM 9974 / NBRC 100139 / OT-3).